The primary structure comprises 435 residues: uncharacterized protein (435 aa).

9 helical membrane passes run 40 to 60 (LVST…EAVF), 103 to 123 (VLWT…WLIL), 133 to 153 (IMLA…IYNP), 195 to 215 (LIHE…IIVL), 226 to 246 (ICTA…AVVG), 313 to 333 (VAVV…LFFV), 358 to 378 (LALP…AVDW), 381 to 401 (WWVM…IDRP), and 414 to 434 (VFVC…NNIG).

It is found in the cell membrane. This is an uncharacterized protein from Mycobacterium bovis (strain ATCC BAA-935 / AF2122/97).